The following is a 420-amino-acid chain: Probable secreted beta-glucosidase SUN4 (420 aa).

Residues 1 to 24 (MKLSATTLTAASLIGYSTIVSALP) form the signal peptide. Residues 89-145 (TKSSSKVASSSESTEQIATTSSSAQTTLTSSETSTSESSVPISTSGSASTSSAASSA) are disordered. N-linked (GlcNAc...) asparagine glycosylation is present at Asn395.

This sequence belongs to the SUN family. In terms of processing, glycosylated.

It localises to the secreted. The protein localises to the cell wall. Involved in the remodeling of the cell wall during the various phases of yeast culture development and under various environmental conditions and plays a role in septation. The protein is Probable secreted beta-glucosidase SUN4 (SUN4) of Saccharomyces cerevisiae (strain ATCC 204508 / S288c) (Baker's yeast).